Reading from the N-terminus, the 498-residue chain is ATP synthase subunit beta, chloroplastic (498 aa).

An ATP-binding site is contributed by 172–179; the sequence is GGAGVGKT.

The protein belongs to the ATPase alpha/beta chains family. In terms of assembly, F-type ATPases have 2 components, CF(1) - the catalytic core - and CF(0) - the membrane proton channel. CF(1) has five subunits: alpha(3), beta(3), gamma(1), delta(1), epsilon(1). CF(0) has four main subunits: a(1), b(1), b'(1) and c(9-12).

The protein resides in the plastid. It localises to the chloroplast thylakoid membrane. The enzyme catalyses ATP + H2O + 4 H(+)(in) = ADP + phosphate + 5 H(+)(out). Its function is as follows. Produces ATP from ADP in the presence of a proton gradient across the membrane. The catalytic sites are hosted primarily by the beta subunits. In Lolium perenne (Perennial ryegrass), this protein is ATP synthase subunit beta, chloroplastic.